We begin with the raw amino-acid sequence, 236 residues long: Proteasome subunit alpha (236 aa).

This sequence belongs to the peptidase T1A family. In terms of assembly, the 20S proteasome core is composed of 14 alpha and 14 beta subunits that assemble into four stacked heptameric rings, resulting in a barrel-shaped structure. The two inner rings, each composed of seven catalytic beta subunits, are sandwiched by two outer rings, each composed of seven alpha subunits. The catalytic chamber with the active sites is on the inside of the barrel. Has a gated structure, the ends of the cylinder being occluded by the N-termini of the alpha-subunits. Is capped by the proteasome-associated ATPase, ARC.

Its subcellular location is the cytoplasm. It functions in the pathway protein degradation; proteasomal Pup-dependent pathway. The formation of the proteasomal ATPase ARC-20S proteasome complex, likely via the docking of the C-termini of ARC into the intersubunit pockets in the alpha-rings, may trigger opening of the gate for substrate entry. Interconversion between the open-gate and close-gate conformations leads to a dynamic regulation of the 20S proteasome proteolysis activity. Component of the proteasome core, a large protease complex with broad specificity involved in protein degradation. The sequence is that of Proteasome subunit alpha from Jonesia denitrificans (strain ATCC 14870 / DSM 20603 / BCRC 15368 / CIP 55.134 / JCM 11481 / NBRC 15587 / NCTC 10816 / Prevot 55134) (Listeria denitrificans).